The primary structure comprises 254 residues: Triosephosphate isomerase (254 aa).

Position 12 to 14 (12 to 14 (NWK)) interacts with substrate. The active-site Electrophile is the His99. The active-site Proton acceptor is the Glu169. Residues Gly175, Ser214, and 235 to 236 (GG) contribute to the substrate site.

The protein belongs to the triosephosphate isomerase family. Homodimer.

Its subcellular location is the cytoplasm. It catalyses the reaction D-glyceraldehyde 3-phosphate = dihydroxyacetone phosphate. The protein operates within carbohydrate biosynthesis; gluconeogenesis. It participates in carbohydrate degradation; glycolysis; D-glyceraldehyde 3-phosphate from glycerone phosphate: step 1/1. In terms of biological role, involved in the gluconeogenesis. Catalyzes stereospecifically the conversion of dihydroxyacetone phosphate (DHAP) to D-glyceraldehyde-3-phosphate (G3P). The protein is Triosephosphate isomerase of Bartonella bacilliformis (strain ATCC 35685 / KC583 / Herrer 020/F12,63).